A 547-amino-acid polypeptide reads, in one-letter code: Serine/threonine-protein kinase pkn3 (547 aa).

The Protein kinase domain maps to 18 to 288 (YRVEALIGEG…EAFKAELQAV (271 aa)). ATP is bound by residues 24–32 (IGEGGMGKV) and Lys47. Asp142 acts as the Proton acceptor in catalysis. Over residues 290–299 (KERRRMDSAP) the composition is skewed to basic and acidic residues. A disordered region spans residues 290 to 327 (KERRRMDSAPRRSANSSAVLAPLPRKSAASPQSDVRDA).

It belongs to the protein kinase superfamily. Ser/Thr protein kinase family.

The enzyme catalyses L-seryl-[protein] + ATP = O-phospho-L-seryl-[protein] + ADP + H(+). The catalysed reaction is L-threonyl-[protein] + ATP = O-phospho-L-threonyl-[protein] + ADP + H(+). The protein is Serine/threonine-protein kinase pkn3 (pkn3) of Myxococcus xanthus.